Here is a 451-residue protein sequence, read N- to C-terminus: UPF0210 protein LMOf2365_0563 (451 aa).

Belongs to the UPF0210 family. In terms of assembly, homodimer.

The sequence is that of UPF0210 protein LMOf2365_0563 from Listeria monocytogenes serotype 4b (strain F2365).